A 179-amino-acid polypeptide reads, in one-letter code: Cell division protein SepF (179 aa).

Residues 18–57 (EDSTVPYEKGNEPVFTPVNSSQEPDLPMNQPSQSAGAKDS) are disordered. A compositionally biased stretch (polar residues) spans 34–57 (PVNSSQEPDLPMNQPSQSAGAKDS).

The protein belongs to the SepF family. In terms of assembly, homodimer. Interacts with FtsZ.

The protein resides in the cytoplasm. Cell division protein that is part of the divisome complex and is recruited early to the Z-ring. Probably stimulates Z-ring formation, perhaps through the cross-linking of FtsZ protofilaments. Its function overlaps with FtsA. This is Cell division protein SepF from Streptococcus pneumoniae (strain Hungary19A-6).